The chain runs to 366 residues: Molybdopterin synthase catalytic subunit (366 aa).

Substrate is bound by residues 101 to 102 (HR), Lys117, and 124 to 126 (KKE).

The protein belongs to the MoaE family. MOCS2B subfamily. As to quaternary structure, heterotetramer; composed of 2 small (Mocs2A) and 2 large (Mocs2B) subunits.

It localises to the cytoplasm. The enzyme catalyses 2 [molybdopterin-synthase sulfur-carrier protein]-C-terminal-Gly-aminoethanethioate + cyclic pyranopterin phosphate + H2O = molybdopterin + 2 [molybdopterin-synthase sulfur-carrier protein]-C-terminal Gly-Gly + 2 H(+). The protein operates within cofactor biosynthesis; molybdopterin biosynthesis. Functionally, catalytic subunit of the molybdopterin synthase complex, a complex that catalyzes the conversion of precursor Z into molybdopterin. Acts by mediating the incorporation of 2 sulfur atoms from thiocarboxylated Mocs2A into precursor Z to generate a dithiolene group. This Drosophila mojavensis (Fruit fly) protein is Molybdopterin synthase catalytic subunit.